We begin with the raw amino-acid sequence, 138 residues long: Ribosome-binding factor A (138 aa).

Belongs to the RbfA family. Monomer. Binds 30S ribosomal subunits, but not 50S ribosomal subunits or 70S ribosomes.

It localises to the cytoplasm. In terms of biological role, one of several proteins that assist in the late maturation steps of the functional core of the 30S ribosomal subunit. Associates with free 30S ribosomal subunits (but not with 30S subunits that are part of 70S ribosomes or polysomes). Required for efficient processing of 16S rRNA. May interact with the 5'-terminal helix region of 16S rRNA. This is Ribosome-binding factor A from Bradyrhizobium sp. (strain BTAi1 / ATCC BAA-1182).